Reading from the N-terminus, the 453-residue chain is Bis(5'-adenosyl)-triphosphatase ENPP4 (453 aa).

The first 15 residues, 1 to 15 (MKLLVILLFSGLITG), serve as a signal peptide directing secretion. Residues 16–407 (FRSDSSSSLP…DQWCINLPEA (392 aa)) lie on the Extracellular side of the membrane. Zn(2+) is bound by residues Asp34 and Thr70. Catalysis depends on Thr70, which acts as the AMP-threonine intermediate. Residues Asn91 and Tyr154 each coordinate substrate. 2 N-linked (GlcNAc...) asparagine glycosylation sites follow: Asn155 and Asn166. Asp189, His193, Asp237, and His238 together coordinate Zn(2+). Residue Asp189 coordinates substrate. Cys254 and Cys287 are disulfide-bonded. Asn276 is a glycosylation site (N-linked (GlcNAc...) asparagine). A Zn(2+)-binding site is contributed by His336. Asn386 carries an N-linked (GlcNAc...) asparagine glycan. Cysteines 394 and 401 form a disulfide. The chain crosses the membrane as a helical span at residues 408–428 (IAIVIGSLLVLTMLTCLIIIM). At 429–453 (QNRLSVPRPFSRLQLQEDDDDPLIG) the chain is on the cytoplasmic side.

It belongs to the nucleotide pyrophosphatase/phosphodiesterase family. The cofactor is Zn(2+). As to expression, expressed on the surface of vascular endothelia.

The protein localises to the cell membrane. It carries out the reaction P(1),P(3)-bis(5'-adenosyl) triphosphate + H2O = AMP + ADP + 2 H(+). Its function is as follows. Hydrolyzes extracellular Ap3A into AMP and ADP, and Ap4A into AMP and ATP. Ap3A and Ap4A are diadenosine polyphosphates thought to induce proliferation of vascular smooth muscle cells. Acts as a procoagulant, mediating platelet aggregation at the site of nascent thrombus via release of ADP from Ap3A and activation of ADP receptors. This Homo sapiens (Human) protein is Bis(5'-adenosyl)-triphosphatase ENPP4 (ENPP4).